Reading from the N-terminus, the 453-residue chain is MEIDTSVFDFHQKVKEVILKEYKLNRELIMLKRCLRYKCMSPAAFYVQVLEVNNPYLINDVTAVTRIITNMMKCVPQLRKDGGKLKDSEIKELEDFIPGYIRYLQIVSEYALILFRGNPLPAVELLKWDPKLPLASYVFVDMNDIYTVSAIREHMDVDRILFDMVLDWCNVSSGWSGNVQKIRRTFRWYYEAVFKADEVIYVDRDEISTENLILFLFVYEEVIARQQPMNAIHTHGSYWNTFLKEFSSVPITMRSQDGGNKYIRHSILTAREKIPGKHVKLRSKEFNLFIHNGRRKLPASDVYTATLQIMWELTGKCFLDSSLLNMDKLREGMMFRKIKIRWHSIRDDLVITRLHTLNREQVIMRDFLVRCNVDANAKHKRKRLKPVETLTLFEKSRMESQNITLDYLLYTHSRLISHKAWQQTNKTSTLSAAQLNSEGHVISGKPDQVESQQ.

This is an uncharacterized protein from Magallana gigas (Pacific oyster).